The sequence spans 156 residues: Putative pre-16S rRNA nuclease (156 aa).

The protein belongs to the YqgF nuclease family.

It is found in the cytoplasm. Its function is as follows. Could be a nuclease involved in processing of the 5'-end of pre-16S rRNA. The sequence is that of Putative pre-16S rRNA nuclease from Nocardioides sp. (strain ATCC BAA-499 / JS614).